The primary structure comprises 226 residues: 1-hydroxy-2-glutathionyl-2-methyl-3-butene dehydrogenase (226 aa).

The protein belongs to the short-chain dehydrogenases/reductases (SDR) family.

It carries out the reaction 2-glutathionyl-2-methylbut-3-en-1-ol + 2 NAD(+) + H2O = 2-glutathionyl-2-methylbut-3-enoate + 2 NADH + 3 H(+). The catalysed reaction is 2-glutathionyl-2-methylbut-3-en-1-ol + NAD(+) = 2-glutathionyl-2-methylbut-3-enal + NADH + H(+). The enzyme catalyses 2-glutathionyl-2-methylbut-3-enal + NAD(+) + H2O = 2-glutathionyl-2-methylbut-3-enoate + NADH + 2 H(+). Functionally, involved in isoprene degradation. Catalyzes the two-step NAD(+)-dependent oxidation of 2-glutathionyl-2-methylbut-3-en-1-ol (HGMB) to 2-glutathionyl-2-methylbut-3-enoate (GMBA). In Rhodococcus sp. (strain AD45), this protein is 1-hydroxy-2-glutathionyl-2-methyl-3-butene dehydrogenase.